A 331-amino-acid chain; its full sequence is MPPASRTRVQRRPVHGVLLLDKPLALSSNQALQKAKWLLRAEKAGHTGTLDPLATGVLPLCFGAATKFSQLQLDAPKTYEAIALPGVTTSTGDAEGAVLQRCAVDPAQLAPERLSAVQRQFTGPISQLPPMHSALKKDGRALYTYARAGIALERAARAVVIHALELSLVQHAPAQTAIKIAVTCSKGCYIRTLAEDIGAALGCGAHLSALRRTDSGGIGIERCISLERLQALPEAERLACLQPPQSLLTRHLRVTLDSDNAARFLSGLPRRGAWPDAPAVAVFGADPPALLGVGHIAGGCLLPDRLLSALEIAQILASQPQRQDCGILEET.

Residue Asp51 is the Nucleophile of the active site.

The protein belongs to the pseudouridine synthase TruB family. Type 1 subfamily.

It catalyses the reaction uridine(55) in tRNA = pseudouridine(55) in tRNA. Responsible for synthesis of pseudouridine from uracil-55 in the psi GC loop of transfer RNAs. This is tRNA pseudouridine synthase B from Verminephrobacter eiseniae (strain EF01-2).